The primary structure comprises 96 residues: 2Fe-2S ferredoxin-5 (96 aa).

Positions 2–96 (PKVIVANINA…GKGDVVIYLP (95 aa)) constitute a 2Fe-2S ferredoxin-type domain. The [2Fe-2S] cluster site is built by Cys-36, Cys-42, Cys-45, and Cys-81.

Belongs to the adrenodoxin/putidaredoxin family. [2Fe-2S] cluster serves as cofactor.

Functionally, may be involved in the assembly of iron-sulfur clusters (Isc-Fd). The protein is 2Fe-2S ferredoxin-5 (fdx5) of Aquifex aeolicus (strain VF5).